Here is a 275-residue protein sequence, read N- to C-terminus: Large ribosomal subunit protein uL2 (275 aa).

2 disordered regions span residues 24–48 (LTTD…NAGD) and 224–264 (VMNP…NKRT). The segment covering 31-42 (KPLTKTKQRTGG) has biased composition (basic residues).

The protein belongs to the universal ribosomal protein uL2 family. Part of the 50S ribosomal subunit. Forms a bridge to the 30S subunit in the 70S ribosome.

Functionally, one of the primary rRNA binding proteins. Required for association of the 30S and 50S subunits to form the 70S ribosome, for tRNA binding and peptide bond formation. It has been suggested to have peptidyltransferase activity; this is somewhat controversial. Makes several contacts with the 16S rRNA in the 70S ribosome. This chain is Large ribosomal subunit protein uL2, found in Koribacter versatilis (strain Ellin345).